The chain runs to 358 residues: Aromatic amino acid aminotransferase (358 aa).

Residue K214 is modified to N6-(pyridoxal phosphate)lysine.

This sequence belongs to the class-II pyridoxal-phosphate-dependent aminotransferase family. Homodimer. Requires pyridoxal 5'-phosphate as cofactor.

The enzyme catalyses an aromatic L-alpha-amino acid + 2-oxoglutarate = an aromatic oxo-acid + L-glutamate. Functionally, aminotransferase that catalyzes the conversion of aromatic amino acids and 2-oxoglutarate into corresponding aromatic oxo acids and L-glutamate. The polypeptide is Aromatic amino acid aminotransferase (Rhodococcus jostii (strain RHA1)).